A 407-amino-acid chain; its full sequence is MRVYVVGGAVRDRLLGLPVQDHDWVVVGATPDEMLARGFRAVGKDFPVFLHPRTGEEYALARTERKSGRGYTGFTVHASPDVTLEEDLRRRDLTINAMAQDEDGTLIDPYGGRRDLENRVFRHVSEAFAEDPVRVLRVARFAARFEGFSVAGETLALMRTMVDDGEVDHLVAERVWQELARGLMETRPSRMFAVLRECCALARILPEVDRLFGVPQPPQHHPEVDTGIHVMAVVDHAAATAQPLAVRWACLLHDLGKADTPVHVLPHHYGHEAKSADRARAVSERLKAPLECRDLAVLLAREHGILHQARALRPVTIVKLLERTDALRRPERFGLLLEAAACDFHGRPGMAERPYVQAAIWQAALAAVRSVDAGAIARSCTDKASIPQRVHEARVAAVKARHAEEKD.

Residues glycine 8 and arginine 11 each coordinate ATP. Positions 8 and 11 each coordinate CTP. Mg(2+)-binding residues include aspartate 21 and aspartate 23. Positions 91, 137, and 140 each coordinate ATP. Arginine 91, arginine 137, and arginine 140 together coordinate CTP. The HD domain occupies 226-327; it reads TGIHVMAVVD…VKLLERTDAL (102 aa).

Belongs to the tRNA nucleotidyltransferase/poly(A) polymerase family. Bacterial CCA-adding enzyme type 1 subfamily. In terms of assembly, monomer. Can also form homodimers and oligomers. Mg(2+) is required as a cofactor. Ni(2+) serves as cofactor.

It carries out the reaction a tRNA precursor + 2 CTP + ATP = a tRNA with a 3' CCA end + 3 diphosphate. The catalysed reaction is a tRNA with a 3' CCA end + 2 CTP + ATP = a tRNA with a 3' CCACCA end + 3 diphosphate. In terms of biological role, catalyzes the addition and repair of the essential 3'-terminal CCA sequence in tRNAs without using a nucleic acid template. Adds these three nucleotides in the order of C, C, and A to the tRNA nucleotide-73, using CTP and ATP as substrates and producing inorganic pyrophosphate. tRNA 3'-terminal CCA addition is required both for tRNA processing and repair. Also involved in tRNA surveillance by mediating tandem CCA addition to generate a CCACCA at the 3' terminus of unstable tRNAs. While stable tRNAs receive only 3'-terminal CCA, unstable tRNAs are marked with CCACCA and rapidly degraded. In Aromatoleum aromaticum (strain DSM 19018 / LMG 30748 / EbN1) (Azoarcus sp. (strain EbN1)), this protein is Multifunctional CCA protein.